The sequence spans 513 residues: ATP synthase subunit alpha (513 aa).

Residue 169-176 participates in ATP binding; the sequence is GDRQTGKT.

Belongs to the ATPase alpha/beta chains family. F-type ATPases have 2 components, CF(1) - the catalytic core - and CF(0) - the membrane proton channel. CF(1) has five subunits: alpha(3), beta(3), gamma(1), delta(1), epsilon(1). CF(0) has three main subunits: a(1), b(2) and c(9-12). The alpha and beta chains form an alternating ring which encloses part of the gamma chain. CF(1) is attached to CF(0) by a central stalk formed by the gamma and epsilon chains, while a peripheral stalk is formed by the delta and b chains.

The protein resides in the cell inner membrane. It catalyses the reaction ATP + H2O + 4 H(+)(in) = ADP + phosphate + 5 H(+)(out). Its function is as follows. Produces ATP from ADP in the presence of a proton gradient across the membrane. The alpha chain is a regulatory subunit. The protein is ATP synthase subunit alpha of Dichelobacter nodosus (strain VCS1703A).